The chain runs to 343 residues: Cytoplasmic tRNA 2-thiolation protein 1 (343 aa).

Belongs to the TtcA family. CTU1/NCS6/ATPBD3 subfamily.

It localises to the cytoplasm. The protein operates within tRNA modification; 5-methoxycarbonylmethyl-2-thiouridine-tRNA biosynthesis. In terms of biological role, plays a central role in 2-thiolation of mcm(5)S(2)U at tRNA wobble positions of tRNA(Lys), tRNA(Glu) and tRNA(Gln). Directly binds tRNAs and probably acts by catalyzing adenylation of tRNAs, an intermediate required for 2-thiolation. It is unclear whether it acts as a sulfurtransferase that transfers sulfur from thiocarboxylated URM1 onto the uridine of tRNAs at wobble position. In Drosophila erecta (Fruit fly), this protein is Cytoplasmic tRNA 2-thiolation protein 1.